The primary structure comprises 344 residues: Dihydroorotate dehydrogenase (quinone) (344 aa).

Residues alanine 65–lysine 69 and threonine 89 each bind FMN. Lysine 69 provides a ligand contact to substrate. Asparagine 114–phenylalanine 118 is a binding site for substrate. Residues asparagine 142 and asparagine 175 each contribute to the FMN site. Residue asparagine 175 participates in substrate binding. The Nucleophile role is filled by serine 178. Position 180 (asparagine 180) interacts with substrate. Positions 220 and 248 each coordinate FMN. Asparagine 249 to threonine 250 provides a ligand contact to substrate. Residues glycine 271, glycine 300, and tyrosine 321–threonine 322 contribute to the FMN site.

It belongs to the dihydroorotate dehydrogenase family. Type 2 subfamily. Monomer. FMN is required as a cofactor.

It localises to the cell membrane. It catalyses the reaction (S)-dihydroorotate + a quinone = orotate + a quinol. It participates in pyrimidine metabolism; UMP biosynthesis via de novo pathway; orotate from (S)-dihydroorotate (quinone route): step 1/1. Its function is as follows. Catalyzes the conversion of dihydroorotate to orotate with quinone as electron acceptor. The polypeptide is Dihydroorotate dehydrogenase (quinone) (Paraburkholderia phymatum (strain DSM 17167 / CIP 108236 / LMG 21445 / STM815) (Burkholderia phymatum)).